A 293-amino-acid chain; its full sequence is 1D-myo-inositol 2-acetamido-2-deoxy-alpha-D-glucopyranoside deacetylase 2 (293 aa).

Zn(2+)-binding residues include His-6, Asp-9, and His-142.

This sequence belongs to the MshB deacetylase family. Zn(2+) is required as a cofactor.

It catalyses the reaction 1D-myo-inositol 2-acetamido-2-deoxy-alpha-D-glucopyranoside + H2O = 1D-myo-inositol 2-amino-2-deoxy-alpha-D-glucopyranoside + acetate. Functionally, catalyzes the deacetylation of 1D-myo-inositol 2-acetamido-2-deoxy-alpha-D-glucopyranoside (GlcNAc-Ins) in the mycothiol biosynthesis pathway. The protein is 1D-myo-inositol 2-acetamido-2-deoxy-alpha-D-glucopyranoside deacetylase 2 of Frankia alni (strain DSM 45986 / CECT 9034 / ACN14a).